Reading from the N-terminus, the 398-residue chain is 1,4-beta-D-glucan cellobiohydrolase CEL6C (398 aa).

An N-terminal signal peptide occupies residues 1 to 18; sequence MKITSSAAALALVASAVA. N-linked (GlcNAc...) asparagine glycosylation is present at asparagine 70. Aspartate 125 is a catalytic residue. The active-site Proton donor is aspartate 170. Substrate contacts are provided by tryptophan 218, tryptophan 318, lysine 346, and glutamate 350.

It belongs to the glycosyl hydrolase 6 (cellulase B) family. Post-translationally, both N- and O-glycosylated.

Its subcellular location is the secreted. The enzyme catalyses Hydrolysis of (1-&gt;4)-beta-D-glucosidic linkages in cellulose and cellotetraose, releasing cellobiose from the non-reducing ends of the chains.. Its function is as follows. Exoglucanase that plays an important function in biomass degradation by catalyzing the hydrolysis of the non-reducing end beta-1,4-glucosidic linkages in cellulose and cellotetraose to release cellobiose. Hydrolyzes crystalline and amorphous cellulose but is inactive on hydroxyethyl cellulose, mannan, galactomannan, xyloglucan, arabinoxylan, arabinan, xylan, and pectin. The sequence is that of 1,4-beta-D-glucan cellobiohydrolase CEL6C from Podospora anserina (strain S / ATCC MYA-4624 / DSM 980 / FGSC 10383) (Pleurage anserina).